The primary structure comprises 311 residues: Aspartate carbamoyltransferase catalytic subunit (311 aa).

Positions 55 and 56 each coordinate carbamoyl phosphate. Lys85 provides a ligand contact to L-aspartate. Carbamoyl phosphate is bound by residues Arg106, His135, and Gln138. L-aspartate is bound by residues Arg168 and Arg230. 2 residues coordinate carbamoyl phosphate: Leu268 and Pro269.

Belongs to the aspartate/ornithine carbamoyltransferase superfamily. ATCase family. In terms of assembly, heterododecamer (2C3:3R2) of six catalytic PyrB chains organized as two trimers (C3), and six regulatory PyrI chains organized as three dimers (R2).

The enzyme catalyses carbamoyl phosphate + L-aspartate = N-carbamoyl-L-aspartate + phosphate + H(+). The protein operates within pyrimidine metabolism; UMP biosynthesis via de novo pathway; (S)-dihydroorotate from bicarbonate: step 2/3. Its function is as follows. Catalyzes the condensation of carbamoyl phosphate and aspartate to form carbamoyl aspartate and inorganic phosphate, the committed step in the de novo pyrimidine nucleotide biosynthesis pathway. The sequence is that of Aspartate carbamoyltransferase catalytic subunit from Klebsiella pneumoniae (strain 342).